The chain runs to 151 residues: Small ribosomal subunit protein uS15 (151 aa).

The protein belongs to the universal ribosomal protein uS15 family. In terms of assembly, component of the small ribosomal subunit. Mature ribosomes consist of a small (40S) and a large (60S) subunit. The 40S subunit contains about 32 different proteins and 1 molecule of RNA (18S). The 60S subunit contains 45 different proteins and 3 molecules of RNA (25S, 5.8S and 5S).

Its subcellular location is the cytoplasm. In terms of biological role, component of the ribosome, a large ribonucleoprotein complex responsible for the synthesis of proteins in the cell. The small ribosomal subunit (SSU) binds messenger RNAs (mRNAs) and translates the encoded message by selecting cognate aminoacyl-transfer RNA (tRNA) molecules. The large subunit (LSU) contains the ribosomal catalytic site termed the peptidyl transferase center (PTC), which catalyzes the formation of peptide bonds, thereby polymerizing the amino acids delivered by tRNAs into a polypeptide chain. The nascent polypeptides leave the ribosome through a tunnel in the LSU and interact with protein factors that function in enzymatic processing, targeting, and the membrane insertion of nascent chains at the exit of the ribosomal tunnel. This chain is Small ribosomal subunit protein uS15 (RPS13), found in Candida albicans (strain SC5314 / ATCC MYA-2876) (Yeast).